The following is a 213-amino-acid chain: Nucleoside triphosphate pyrophosphatase (213 aa).

Asp-79 functions as the Proton acceptor in the catalytic mechanism.

The protein belongs to the Maf family. Requires a divalent metal cation as cofactor.

The protein resides in the cytoplasm. The catalysed reaction is a ribonucleoside 5'-triphosphate + H2O = a ribonucleoside 5'-phosphate + diphosphate + H(+). It catalyses the reaction a 2'-deoxyribonucleoside 5'-triphosphate + H2O = a 2'-deoxyribonucleoside 5'-phosphate + diphosphate + H(+). Nucleoside triphosphate pyrophosphatase. May have a dual role in cell division arrest and in preventing the incorporation of modified nucleotides into cellular nucleic acids. This Rhodococcus erythropolis (strain PR4 / NBRC 100887) protein is Nucleoside triphosphate pyrophosphatase.